The sequence spans 1237 residues: Anion exchange protein 2 (1237 aa).

The segment at 1–238 is disordered; the sequence is MSSAPRRPAS…YNLQERRRIG (238 aa). At 1 to 703 the chain is on the cytoplasmic side; that stretch reads MSSAPRRPAS…SDFRDALDPQ (703 aa). Basic and acidic residues-rich tracts occupy residues 38–48 and 57–74; these read LRTLGVERFEE and GGEE…EYHR. 2 stretches are compositionally biased toward basic residues: residues 75-84 and 93-109; these read QSSHHIHHPL and RRRK…RRRP. Residues serine 112, serine 131, serine 144, serine 170, serine 172, and serine 239 each carry the phosphoserine modification. The segment covering 119–132 has biased composition (acidic residues); sequence TIEEGEEDEEEASE. Threonine 253 carries the post-translational modification Phosphothreonine. The residue at position 270 (lysine 270) is an N6-methyllysine. The disordered stretch occupies residues 285–316; sequence VRKNAKGSTQAAREGREPGPTPRARPRAPHKP. The residue at position 439 (serine 439) is a Phosphoserine. Residues 445 to 466 form a disordered region; the sequence is SLLGHHHAQGTESDPHVTEPLI. The next 4 membrane-spanning stretches (helical) occupy residues 704 to 727, 733 to 770, 790 to 812, and 822 to 843; these read CLAA…GLLG, LIGV…LLVF, VWIG…SFLV, and IFAF…IKIF. The segment at 704–1237 is membrane (anion exchange); that stretch reads CLAAVIFIYF…DEYNEMPMPV (534 aa). The Extracellular portion of the chain corresponds to 844–896; it reads QEHPLHGCSGSNDSEAGSSSSSNMTWATTILVPDNSSASGQSGQEKPRGQPNT. N-linked (GlcNAc...) asparagine glycans are attached at residues asparagine 855, asparagine 866, and asparagine 878. A helical transmembrane segment spans residues 897–914; that stretch reads ALLSLVLMAGTFFIAFFL. Topologically, residues 915 to 929 are cytoplasmic; the sequence is RKFKNSRFFPGRIRR. 5 helical membrane passes run 930 to 950, 984 to 1006, 1032 to 1053, 1087 to 1132, and 1159 to 1195; these read VIGD…DYSI, PFPV…LIFM, LLLI…LAAA, VTGL…IQFY, and MHLF…TVPL. Cysteine 1169 is lipidated: S-palmitoyl cysteine.

The protein belongs to the anion exchanger (TC 2.A.31) family. As to expression, expressed in the choroid plexus epithelium (at protein level). Expressed in the parotid gland and sublingual salivary gland acinar cells (at protein level). Widely expressed at similar levels in all tissues examined. Expressed in the testis. In terms of tissue distribution, predominantly expressed in stomach although they are also detected at lower levels in other tissues. Expressed in the testis. As to expression, stomach-specific. Expressed at slightly higher levels in lung and stomach than in other tissues.

The protein localises to the apical cell membrane. Its subcellular location is the basolateral cell membrane. It carries out the reaction hydrogencarbonate(in) + chloride(out) = hydrogencarbonate(out) + chloride(in). Its activity is regulated as follows. Inhibited by 4,4'-diisothiocyanatostilbene-2,2'-disulfonic acid (DIDS) and acetazolamide. Muscarinic receptor stimulation enhances activity through a Ca(2+)-dependent mechanism. Functionally, sodium-independent anion exchanger which mediates the electroneutral exchange of chloride for bicarbonate ions across the cell membrane. Plays an important role in osteoclast differentiation and function. Regulates bone resorption and calpain-dependent actin cytoskeleton organization in osteoclasts via anion exchange-dependent control of pH. Essential for intracellular pH regulation in CD8(+) T-cells upon CD3 stimulation, modulating CD8(+) T-cell responses. Its function is as follows. Plays a critical role in male fertility and spermiogenesis. In Mus musculus (Mouse), this protein is Anion exchange protein 2 (Slc4a2).